The primary structure comprises 406 residues: Exodeoxyribonuclease 7 large subunit (406 aa).

This sequence belongs to the XseA family. In terms of assembly, heterooligomer composed of large and small subunits.

The protein resides in the cytoplasm. The enzyme catalyses Exonucleolytic cleavage in either 5'- to 3'- or 3'- to 5'-direction to yield nucleoside 5'-phosphates.. In terms of biological role, bidirectionally degrades single-stranded DNA into large acid-insoluble oligonucleotides, which are then degraded further into small acid-soluble oligonucleotides. This chain is Exodeoxyribonuclease 7 large subunit, found in Desulforudis audaxviator (strain MP104C).